The primary structure comprises 248 residues: Large ribosomal subunit protein uL2 (248 aa).

The tract at residues 203–248 (AHPAGGGHHPKGLTPAPRNAPPGRKVGHIAPRRTGRKKGASRTPTQ) is disordered. A compositionally biased stretch (basic residues) spans 227 to 242 (KVGHIAPRRTGRKKGA).

It belongs to the universal ribosomal protein uL2 family. Part of the 50S ribosomal subunit. Forms a bridge to the 30S subunit in the 70S ribosome.

Its function is as follows. One of the primary rRNA binding proteins. Required for association of the 30S and 50S subunits to form the 70S ribosome, for tRNA binding and peptide bond formation. It has been suggested to have peptidyltransferase activity; this is somewhat controversial. Makes several contacts with the 16S rRNA in the 70S ribosome. This Thermofilum pendens (strain DSM 2475 / Hrk 5) protein is Large ribosomal subunit protein uL2.